A 130-amino-acid polypeptide reads, in one-letter code: Small ribosomal subunit protein uS8 (130 aa).

Belongs to the universal ribosomal protein uS8 family.

In Agaricus bisporus (White button mushroom), this protein is Small ribosomal subunit protein uS8 (rps22).